Consider the following 388-residue polypeptide: Carbamoyl phosphate synthase small chain (388 aa).

Residues 1-192 (MPLSDAMPAL…FNPDGTVKNG (192 aa)) are CPSase. Ser51, Gly244, and Gly246 together coordinate L-glutamine. The 187-residue stretch at 196-382 (TVVALDFGVK…VHQMRTTKQA (187 aa)) folds into the Glutamine amidotransferase type-1 domain. Cys272 acts as the Nucleophile in catalysis. 4 residues coordinate L-glutamine: Met273, Gln276, Asn312, and Phe315. Residues His355 and Glu357 contribute to the active site.

It belongs to the CarA family. As to quaternary structure, composed of two chains; the small (or glutamine) chain promotes the hydrolysis of glutamine to ammonia, which is used by the large (or ammonia) chain to synthesize carbamoyl phosphate. Tetramer of heterodimers (alpha,beta)4.

It carries out the reaction hydrogencarbonate + L-glutamine + 2 ATP + H2O = carbamoyl phosphate + L-glutamate + 2 ADP + phosphate + 2 H(+). The catalysed reaction is L-glutamine + H2O = L-glutamate + NH4(+). The protein operates within amino-acid biosynthesis; L-arginine biosynthesis; carbamoyl phosphate from bicarbonate: step 1/1. It functions in the pathway pyrimidine metabolism; UMP biosynthesis via de novo pathway; (S)-dihydroorotate from bicarbonate: step 1/3. In terms of biological role, small subunit of the glutamine-dependent carbamoyl phosphate synthetase (CPSase). CPSase catalyzes the formation of carbamoyl phosphate from the ammonia moiety of glutamine, carbonate, and phosphate donated by ATP, constituting the first step of 2 biosynthetic pathways, one leading to arginine and/or urea and the other to pyrimidine nucleotides. The small subunit (glutamine amidotransferase) binds and cleaves glutamine to supply the large subunit with the substrate ammonia. In Nostoc sp. (strain PCC 7120 / SAG 25.82 / UTEX 2576), this protein is Carbamoyl phosphate synthase small chain.